The primary structure comprises 417 residues: Nuclear envelope integral membrane protein 2 (417 aa).

Positions Met1–Gly24 are cleaved as a signal peptide. 5 helical membrane passes run Asn148–Ala168, Phe177–Leu197, Thr207–Met227, Ile239–His259, and Leu280–Leu300.

The protein belongs to the NEMP family.

The protein localises to the nucleus inner membrane. This Homo sapiens (Human) protein is Nuclear envelope integral membrane protein 2 (NEMP2).